The chain runs to 186 residues: Large ribosomal subunit protein uL10 (186 aa).

The protein belongs to the universal ribosomal protein uL10 family. As to quaternary structure, part of the ribosomal stalk of the 50S ribosomal subunit. The N-terminus interacts with L11 and the large rRNA to form the base of the stalk. The C-terminus forms an elongated spine to which L12 dimers bind in a sequential fashion forming a multimeric L10(L12)X complex.

Functionally, forms part of the ribosomal stalk, playing a central role in the interaction of the ribosome with GTP-bound translation factors. The sequence is that of Large ribosomal subunit protein uL10 from Rhodococcus jostii (strain RHA1).